Reading from the N-terminus, the 391-residue chain is GATA-binding factor 6-B (391 aa).

The span at 57 to 69 shows a compositional bias: polar residues; the sequence is GTHSVNSHWSQAT. The segment at 57–107 is disordered; the sequence is GTHSVNSHWSQATSESSSYSSSSPHPSSRYHYSPSPPMANGSTRDTGYSSS. The segment covering 70 to 89 has biased composition (low complexity); the sequence is SESSSYSSSSPHPSSRYHYS. Residues 96–107 show a composition bias toward polar residues; it reads NGSTRDTGYSSS. 2 GATA-type zinc fingers span residues 182–206 and 236–260; these read CVNC…CNAC and CANC…CNAC. A disordered region spans residues 277-334; the sequence is KEGIQTRKRKPKNLNKSKSSSSNGNSSHHITMTPTSTTSSTNSDDCIKNGSPSQNTAP. Basic residues predominate over residues 282-291; sequence TRKRKPKNLN. Over residues 292 to 319 the composition is skewed to low complexity; sequence KSKSSSSNGNSSHHITMTPTSTTSSTNS.

As to expression, in embryos, expressed in the presumptive heart mesoderm. In adults, widely distributed but predominant in the heart.

It is found in the nucleus. In terms of biological role, transcriptional activator that binds 5'-GATA-3'-containing motifs within gene promoters. Regulates cardiac-specific transcription during embryogenesis and thereby cardiogenesis. The polypeptide is GATA-binding factor 6-B (gata6-b) (Xenopus laevis (African clawed frog)).